The primary structure comprises 137 residues: Ribonuclease P protein component (137 aa).

This sequence belongs to the RnpA family. In terms of assembly, consists of a catalytic RNA component (M1 or rnpB) and a protein subunit.

It catalyses the reaction Endonucleolytic cleavage of RNA, removing 5'-extranucleotides from tRNA precursor.. Its function is as follows. RNaseP catalyzes the removal of the 5'-leader sequence from pre-tRNA to produce the mature 5'-terminus. It can also cleave other RNA substrates such as 4.5S RNA. The protein component plays an auxiliary but essential role in vivo by binding to the 5'-leader sequence and broadening the substrate specificity of the ribozyme. This Porphyromonas gingivalis (strain ATCC BAA-308 / W83) protein is Ribonuclease P protein component.